The primary structure comprises 810 residues: MEHKEVVLLLLLFLKSGQGEPLDDYVNTQGASLFSVTKKQLRAGSIEECAAKCEEEKEFTCRAFQYHSKEQQCVIMAENRKSSIIIRMRDVVLFEKKVYLSECKTGNGKNYRGTMSKTKNGITCQKWSSTSPHRPRFSPATHPSEGLEENYCRNPDNDAQGPWCYTTDPEHRYDYCDIPECEEACMHCSGENYDGKISKTMSGLECQAWDSQSPHAHGYIPSKFPNKNLKKNYCRNPDGEPRPWCFTTDPNKRWELCDIPRCTTPPPSSGPTYQCLKGTGENYRGNVAVTVSGHTCQRWSAQTPQTHNRTPENFPCKNLDENYCRNPDGEKAPWCYTTNSQVRWEYCKIPSCGSSPVSTEQLDPTAPPELTPVVQDCYHGDGQSYRGTSSTTTTGKKCQSWSSMTPHWHQKTPENYPDAGLTMNYCRNPDADKGPWCFTTDPSVRWEYCNLKKCSGTEGSVVAPPPVVQLPNVETPSEEDCMFGNGKGYRGKRATTVTGTPCQEWAAQEPHRHSIFTPQTNPRAGLEKNYCRNPDGDEGGPWCYTTNPRKHYDYCDVPQCASSSFDCGKPQVEPKKCPGRVVGGCVANAHSWPWQVSLRTRFGTHFCGGTLISPEWVLTAAHCLEKSPRPSSYKVILGAHQEVNLEPHVQEIEVSRLFLEPTRADIALLKLSSPAVITDKVIPACLPSPNYVVAGRTECFITGWGETQGTFGAGLLKEAQLPVIENKVCNRYEFLNGRVKSTELCAGHLAGGTDSCQGDSGGPLVCFEKDKYILQGVTSWGLGCARPNKPGVYVRVSRFVTWIEGVMRNN.

The signal sequence occupies residues 1–19; that stretch reads MEHKEVVLLLLLFLKSGQG. The PAN domain maps to 20–98; it reads EPLDDYVNTQ…RDVVLFEKKV (79 aa). 12 disulfide bridges follow: Cys-49-Cys-73, Cys-53-Cys-61, Cys-103-Cys-181, Cys-124-Cys-164, Cys-152-Cys-176, Cys-185-Cys-262, Cys-188-Cys-316, Cys-206-Cys-245, Cys-234-Cys-257, Cys-275-Cys-352, Cys-296-Cys-335, and Cys-324-Cys-347. Kringle domains are found at residues 103-181, 184-262, and 275-352; these read CKTG…IPEC, ACMH…IPRC, and CLKG…IPSC. The segment at 126 to 145 is disordered; sequence KWSSTSPHRPRFSPATHPSE. Residues Arg-136, Asp-158, and Arg-172 each coordinate L-lysine. Residue Thr-365 is glycosylated (O-linked (GalNAc...) threonine). 9 cysteine pairs are disulfide-bonded: Cys-377–Cys-454, Cys-398–Cys-437, Cys-426–Cys-449, Cys-481–Cys-560, Cys-502–Cys-543, Cys-531–Cys-555, Cys-567–Cys-685, Cys-577–Cys-585, and Cys-607–Cys-623. Kringle domains are found at residues 377–454 and 481–560; these read CYHG…LKKC and CMFG…VPQC. 2 residues coordinate L-lysine: Asp-432 and Arg-445. A Peptidase S1 domain is found at 581-808; it reads VVGGCVANAH…FVTWIEGVMR (228 aa). Ser-597 is modified (phosphoserine). Active-site charge relay system residues include His-622 and Asp-665. The residue at position 688 (Ser-688) is a Phosphoserine. Cystine bridges form between Cys-699–Cys-766, Cys-729–Cys-745, and Cys-756–Cys-784. The active-site Charge relay system is the Ser-760.

Belongs to the peptidase S1 family. Plasminogen subfamily. Interacts with CSPG4 and AMOT. Interacts (via the Kringle domains) with HRG; the interaction tethers PLG to the cell surface and enhances its activation. Interacts (via Kringle 4 domain) with ADA; the interaction stimulates PLG activation when in complex with DPP4. Angiostatin: Interacts with ATP5F1A; the interaction inhibits most of the angiogenic effects of angiostatin. In the presence of the inhibitor, the activation involves only cleavage after Arg-580, yielding two chains held together by two disulfide bonds. In the absence of the inhibitor, the activation involves additionally the removal of the activation peptide.

It localises to the secreted. The catalysed reaction is Preferential cleavage: Lys-|-Xaa &gt; Arg-|-Xaa, higher selectivity than trypsin. Converts fibrin into soluble products.. Converted into plasmin by plasminogen activators, both plasminogen and its activator being bound to fibrin. Activated with catalytic amounts of streptokinase. Plasmin dissolves the fibrin of blood clots and acts as a proteolytic factor in a variety of other processes including embryonic development, tissue remodeling, tumor invasion, and inflammation. In ovulation, weakens the walls of the Graafian follicle. It activates the urokinase-type plasminogen activator, collagenases and several complement zymogens, such as C1, C4 and C5. Cleavage of fibronectin and laminin leads to cell detachment and apoptosis. Also cleaves fibrin, thrombospondin and von Willebrand factor. Its role in tissue remodeling and tumor invasion may be modulated by CSPG4. Binds to cells. The polypeptide is Plasminogen (PLG) (Pongo abelii (Sumatran orangutan)).